Reading from the N-terminus, the 506-residue chain is BTB/POZ domain-containing protein 16 (506 aa).

One can recognise a BTB domain in the interval 150–206 (INDPAVTRVAFALALKNLYMNEVEMTVDNVLGVLASAHILQFNRLFRKCVSTMLNRL).

This Rattus norvegicus (Rat) protein is BTB/POZ domain-containing protein 16 (Btbd16).